The primary structure comprises 383 residues: Arginine biosynthesis bifunctional protein ArgJ (383 aa).

The substrate site is built by Thr146, Lys168, Thr179, Glu259, Asn378, and Ser383. Thr179 serves as the catalytic Nucleophile.

Belongs to the ArgJ family. In terms of assembly, heterotetramer of two alpha and two beta chains.

The protein resides in the cytoplasm. The enzyme catalyses N(2)-acetyl-L-ornithine + L-glutamate = N-acetyl-L-glutamate + L-ornithine. It catalyses the reaction L-glutamate + acetyl-CoA = N-acetyl-L-glutamate + CoA + H(+). The protein operates within amino-acid biosynthesis; L-arginine biosynthesis; L-ornithine and N-acetyl-L-glutamate from L-glutamate and N(2)-acetyl-L-ornithine (cyclic): step 1/1. It participates in amino-acid biosynthesis; L-arginine biosynthesis; N(2)-acetyl-L-ornithine from L-glutamate: step 1/4. Its function is as follows. Catalyzes two activities which are involved in the cyclic version of arginine biosynthesis: the synthesis of N-acetylglutamate from glutamate and acetyl-CoA as the acetyl donor, and of ornithine by transacetylation between N(2)-acetylornithine and glutamate. In Streptomyces coelicolor (strain ATCC BAA-471 / A3(2) / M145), this protein is Arginine biosynthesis bifunctional protein ArgJ.